Consider the following 1136-residue polypeptide: Unconventional myosin-Ib (1136 aa).

The region spanning 15–701 (IGVGDMVLLE…TLFKLEDLRK (687 aa)) is the Myosin motor domain. S60 is subject to Phosphoserine. 108–115 (GESGAGKT) lines the ATP pocket. K287 participates in a covalent cross-link: Glycyl lysine isopeptide (Lys-Gly) (interchain with G-Cter in SUMO1); alternate. Residue K287 forms a Glycyl lysine isopeptide (Lys-Gly) (interchain with G-Cter in SUMO2); alternate linkage. The interval 578–600 (VATLMKNLQTKNPNYIRCIKPND) is actin-binding. IQ domains lie at 704–733 (LEDL…SQIV), 728–748 (KKSQ…KRYQ), 750–779 (TKSS…QKRC), 779–808 (CKEA…EARN), 808–837 (NKHA…EARR), and 837–866 (RKHA…ANAG). In terms of domain architecture, TH1 spans 952–1136 (KALYPSSVGQ…NNRLLEVAVP (185 aa)).

The protein belongs to the TRAFAC class myosin-kinesin ATPase superfamily. Myosin family.

Its function is as follows. Motor protein that may participate in process critical to neuronal development and function such as cell migration, neurite outgrowth and vesicular transport. The polypeptide is Unconventional myosin-Ib (MYO1B) (Homo sapiens (Human)).